Here is a 152-residue protein sequence, read N- to C-terminus: D-aminoacyl-tRNA deacylase (152 aa).

Residues glycine 142 to proline 143 carry the Gly-cisPro motif, important for rejection of L-amino acids motif.

It belongs to the DTD family. In terms of assembly, homodimer.

The protein resides in the cytoplasm. The catalysed reaction is glycyl-tRNA(Ala) + H2O = tRNA(Ala) + glycine + H(+). It carries out the reaction a D-aminoacyl-tRNA + H2O = a tRNA + a D-alpha-amino acid + H(+). In terms of biological role, an aminoacyl-tRNA editing enzyme that deacylates mischarged D-aminoacyl-tRNAs. Also deacylates mischarged glycyl-tRNA(Ala), protecting cells against glycine mischarging by AlaRS. Acts via tRNA-based rather than protein-based catalysis; rejects L-amino acids rather than detecting D-amino acids in the active site. By recycling D-aminoacyl-tRNA to D-amino acids and free tRNA molecules, this enzyme counteracts the toxicity associated with the formation of D-aminoacyl-tRNA entities in vivo and helps enforce protein L-homochirality. This chain is D-aminoacyl-tRNA deacylase, found in Burkholderia multivorans (strain ATCC 17616 / 249).